Consider the following 462-residue polypeptide: Transcript termination protein A18 (462 aa).

Positions 99-255 constitute a Helicase ATP-binding domain; sequence KCKEKRPLYT…NSIINFIKFS (157 aa). Residue 112–119 coordinates ATP; it reads LACGFGKT. The short motif at 205–208 is the DEAH box element; it reads DEAH. One can recognise a Helicase C-terminal domain in the interval 308–459; it reads IVDKIIETFK…ATKLGFREVS (152 aa).

It belongs to the helicase family. Poxviruses subfamily. In terms of assembly, interacts with G2. Might be part of a transcription complex composed at least of G2, A18, and H5.

The protein localises to the virion. Functionally, DNA helicase which seems to act as a postreplicative transcription termination factor. Involved in ATP-dependent release of nascent RNA. Forms a stable complex with single-stranded DNA, and to a lesser extent RNA. This is Transcript termination protein A18 from Vertebrata (FPV).